Consider the following 767-residue polypeptide: Cilia- and flagella-associated protein 91 (767 aa).

Positions 1-29 are disordered; the sequence is MSHAVTIEEPQAQPQVSQTRYRERSRAGS.

The protein belongs to the CFAP91 family. As to quaternary structure, interacts with MYCBP and AKAP1. Part of a complex containing MYCBP, AKAP1 and PRKAR2B. Interacts with CFAP61. In terms of assembly, does not interact with MYCBP. Post-translationally, phosphorylated by PKA. In terms of tissue distribution, strongly expressed in the liver. As to expression, widely expressed, but strongly expressed in all spermatogenesis-related tissues, including the testis, the epithelium of cauda and the corpus epididymis, as well as the spermatid and mature sperm. Also expressed in Leydig cells.

It localises to the mitochondrion. It is found in the cytoplasm. Its subcellular location is the cytoskeleton. The protein resides in the cilium axoneme. Involved in sperm flagellum axonemal organization and function. May regulate cilium motility through its role in the assembly of the axonemal radial spokes. The protein is Cilia- and flagella-associated protein 91 of Homo sapiens (Human).